The sequence spans 141 residues: Transcription antitermination protein NusB (141 aa).

This sequence belongs to the NusB family.

Its function is as follows. Involved in transcription antitermination. Required for transcription of ribosomal RNA (rRNA) genes. Binds specifically to the boxA antiterminator sequence of the ribosomal RNA (rrn) operons. This is Transcription antitermination protein NusB from Neisseria meningitidis serogroup C (strain 053442).